A 309-amino-acid polypeptide reads, in one-letter code: Homoserine kinase (309 aa).

85 to 95 (PYGLGLGSSGS) is a binding site for ATP.

The protein belongs to the GHMP kinase family. Homoserine kinase subfamily.

It localises to the cytoplasm. It catalyses the reaction L-homoserine + ATP = O-phospho-L-homoserine + ADP + H(+). It functions in the pathway amino-acid biosynthesis; L-threonine biosynthesis; L-threonine from L-aspartate: step 4/5. Functionally, catalyzes the ATP-dependent phosphorylation of L-homoserine to L-homoserine phosphate. The chain is Homoserine kinase from Thermoplasma volcanium (strain ATCC 51530 / DSM 4299 / JCM 9571 / NBRC 15438 / GSS1).